We begin with the raw amino-acid sequence, 385 residues long: Cytochrome b (385 aa).

At 1–27 (MRLLKSHPLLKLVNSYLIDASQPSNIS) the chain is on the mitochondrial matrix side. Position 16 (Tyr-16) interacts with a ubiquinone. Residues 28-51 (YLWNFGSLLACCLIIQIVTGVTLA) traverse the membrane as a helical segment. Residues 52 to 74 (MHYSPNVLEAFNSIEHIMRDVNN) lie on the Mitochondrial intermembrane side of the membrane. The chain crosses the membrane as a helical span at residues 75 to 102 (GWLVRYLHSNTASAFFFLVYLHIGRGMY). Heme b contacts are provided by His-82 and His-96. Topologically, residues 103–110 (YGSYRAPR) are mitochondrial matrix. Residues 111 to 135 (TLVWAIGTVILILMMATAFLGYVLP) form a helical membrane-spanning segment. At 136-172 (YGQMSLWGATVITNLISAIPWIGQDIVEFIWGGFSVN) the chain is on the mitochondrial intermembrane side. Residues 173-205 (NATLNRFFALHFVLPFILAALVLMHLIALHDTA) form a helical membrane-spanning segment. 2 residues coordinate heme b: His-183 and His-197. Position 202 (His-202) interacts with a ubiquinone. Topologically, residues 206-224 (GSSNPLGVSGNYDRITFAP) are mitochondrial matrix. Residues 225–247 (YYLFKDLITIFIFIYVLSSFVFF) traverse the membrane as a helical segment. At 248–288 (MPNVLGDSENYIMANPMQTPPAIVPEWYLLPFYAILRSIPN) the chain is on the mitochondrial intermembrane side. A helical transmembrane segment spans residues 289-309 (KLLGVIAMFSAILAIMLLPIT). Residues 310-320 (DLGRSKGLQFR) lie on the Mitochondrial matrix side of the membrane. The helical transmembrane segment at 321–341 (PLSKFAFWAFVVNFLILMKLG) threads the bilayer. At 342-348 (ACHVESP) the chain is on the mitochondrial intermembrane side. Residues 349–365 (FIELGQFSTIFYFSYFI) form a helical membrane-spanning segment. Over 366 to 385 (FIVPVLSLIENTLVDLNYLK) the chain is Mitochondrial matrix.

Belongs to the cytochrome b family. As to quaternary structure, component of the ubiquinol-cytochrome c oxidoreductase (cytochrome b-c1 complex, complex III, CIII), a multisubunit enzyme composed of 10 subunits. The complex is composed of 3 respiratory subunits cytochrome b (cob), cytochrome c1 (cyt-1) and Rieske protein (fes-1), 2 core protein subunits pep and ucr-1, and 5 low-molecular weight protein subunits qcr6, qcr7, qcr8, qcr9 and probably NCU16844/qcr10. The complex exists as an obligatory dimer and forms supercomplexes (SCs) in the inner mitochondrial membrane with NADH-ubiquinone oxidoreductase (complex I, CI) and cytochrome c oxidase (complex IV, CIV), resulting in different assemblies (supercomplexes SCI(1)III(2), SCIII(2)IV(1) and SCIII(2)IV(2) as well as higher order I(x)III(y)IV(z) megacomplexes). It depends on heme b as a cofactor.

The protein localises to the mitochondrion inner membrane. The catalysed reaction is a quinol + 2 Fe(III)-[cytochrome c](out) = a quinone + 2 Fe(II)-[cytochrome c](out) + 2 H(+)(out). Component of the ubiquinol-cytochrome c oxidoreductase, a multisubunit transmembrane complex that is part of the mitochondrial electron transport chain which drives oxidative phosphorylation. The respiratory chain contains 3 multisubunit complexes succinate dehydrogenase (complex II, CII), ubiquinol-cytochrome c oxidoreductase (cytochrome b-c1 complex, complex III, CIII) and cytochrome c oxidase (complex IV, CIV), that cooperate to transfer electrons derived from NADH and succinate to molecular oxygen, creating an electrochemical gradient over the inner membrane that drives transmembrane transport and the ATP synthase. The cytochrome b-c1 complex catalyzes electron transfer from ubiquinol to cytochrome c, linking this redox reaction to translocation of protons across the mitochondrial inner membrane, with protons being carried across the membrane as hydrogens on the quinol. In the process called Q cycle, 2 protons are consumed from the matrix, 4 protons are released into the intermembrane space and 2 electrons are passed to cytochrome c. Cytochrome b is a catalytic core subunit containing 2 b-type hemes BL and BH topographically segregated in the quinone reduction (Qi) and quinol oxidation (Q0) sites on opposite sides of the membrane. The polypeptide is Cytochrome b (cob) (Neurospora crassa (strain ATCC 24698 / 74-OR23-1A / CBS 708.71 / DSM 1257 / FGSC 987)).